We begin with the raw amino-acid sequence, 60 residues long: Single-pass membrane and coiled-coil domain-containing protein 4 homolog (60 aa).

The interval 1–21 is disordered; it reads MRKLRGGQTKETRKQKQERRE. Positions 8–21 are enriched in basic and acidic residues; the sequence is QTKETRKQKQERRE. The stretch at 10–33 forms a coiled coil; sequence KETRKQKQERREENLKIQQQLKTI. A helical membrane pass occupies residues 32–52; that stretch reads TIVLPICGVFLMCIVVYVFLK.

Belongs to the SMCO4 family.

Its subcellular location is the membrane. This is Single-pass membrane and coiled-coil domain-containing protein 4 homolog from Aedes aegypti (Yellowfever mosquito).